The primary structure comprises 360 residues: Nicotinate-nucleotide--dimethylbenzimidazole phosphoribosyltransferase (360 aa).

Residue Glu327 is the Proton acceptor of the active site.

Belongs to the CobT family.

The enzyme catalyses 5,6-dimethylbenzimidazole + nicotinate beta-D-ribonucleotide = alpha-ribazole 5'-phosphate + nicotinate + H(+). It functions in the pathway nucleoside biosynthesis; alpha-ribazole biosynthesis; alpha-ribazole from 5,6-dimethylbenzimidazole: step 1/2. In terms of biological role, catalyzes the synthesis of alpha-ribazole-5'-phosphate from nicotinate mononucleotide (NAMN) and 5,6-dimethylbenzimidazole (DMB). The polypeptide is Nicotinate-nucleotide--dimethylbenzimidazole phosphoribosyltransferase (Shewanella baltica (strain OS223)).